A 508-amino-acid polypeptide reads, in one-letter code: Glutamate--cysteine ligase, chloroplastic (508 aa).

Residues 1–59 (MTTIFRLASSSSPSLRHDATPHNFHIRKTSISNTFSFSSKNSLSFKRILTSGGSRRFIV) constitute a chloroplast transit peptide. 2 disulfides stabilise this stretch: C172–C392 and C335–C350.

It belongs to the carboxylate-amine ligase family. Glutamate--cysteine ligase type 2 subfamily. In terms of assembly, homodimer or monomer when oxidized or reduced, respectively. The Cys-172-Cys-392 disulfide bridge is known to modulate the enzyme activity according to the redox status. The oxidized form constitutes the active enzyme.

It localises to the plastid. The protein resides in the chloroplast. It catalyses the reaction L-cysteine + L-glutamate + ATP = gamma-L-glutamyl-L-cysteine + ADP + phosphate + H(+). It functions in the pathway sulfur metabolism; glutathione biosynthesis; glutathione from L-cysteine and L-glutamate: step 1/2. This Medicago truncatula (Barrel medic) protein is Glutamate--cysteine ligase, chloroplastic (GSH1).